The sequence spans 425 residues: Pleckstrin homology domain-containing family A member 2 (425 aa).

Residues 7–113 (QNRICGFLDI…WVEALNQASK (107 aa)) form the PH 1 domain. A Glycyl lysine isopeptide (Lys-Gly) (interchain with G-Cter in SUMO2) cross-link involves residue Lys141. At Ser184 the chain carries Phosphoserine. Residues 198 to 298 (PLIKSGYCVK…WIEGIGAAVQ (101 aa)) enclose the PH 2 domain. A compositionally biased stretch (polar residues) spans 310–331 (SRSISLTRPGSSTLTSAPNSIL). Positions 310–425 (SRSISLTRPG…DDENIRTSDV (116 aa)) are disordered. Phosphoserine occurs at positions 314 and 349. 2 stretches are compositionally biased toward basic and acidic residues: residues 363–375 (AEEK…HAPE) and 400–410 (RSEPQHPKEKP).

As to quaternary structure, binds MPDZ and PTPN13.

The protein localises to the cytoplasm. Its subcellular location is the cell membrane. The protein resides in the nucleus. In terms of biological role, binds specifically to phosphatidylinositol 3,4-diphosphate (PtdIns3,4P2), but not to other phosphoinositides. May recruit other proteins to the plasma membrane. This Mus musculus (Mouse) protein is Pleckstrin homology domain-containing family A member 2 (Plekha2).